The chain runs to 159 residues: Eukaryotic translation initiation factor 5A-1 (159 aa).

Basic and acidic residues predominate over residues 1 to 12; that stretch reads MSDEEHHFESKA. The segment at 1–23 is disordered; it reads MSDEEHHFESKADAGASKTYPQQ. K52 carries the post-translational modification Hypusine.

This sequence belongs to the eIF-5A family. Lys-52 undergoes hypusination, a unique post-translational modification that consists in the addition of a butylamino group from spermidine to lysine side chain, leading to the formation of the unusual amino acid hypusine. eIF-5As are the only known proteins to undergo this modification, which is essential for their function.

Its function is as follows. Translation factor that promotes translation elongation and termination, particularly upon ribosome stalling at specific amino acid sequence contexts. Binds between the exit (E) and peptidyl (P) site of the ribosome and promotes rescue of stalled ribosome: specifically required for efficient translation of polyproline-containing peptides as well as other motifs that stall the ribosome. Acts as a ribosome quality control (RQC) cofactor by joining the RQC complex to facilitate peptidyl transfer during CAT tailing step. The sequence is that of Eukaryotic translation initiation factor 5A-1 from Solanum lycopersicum (Tomato).